The chain runs to 494 residues: Guanosine-5'-triphosphate,3'-diphosphate pyrophosphatase (494 aa).

This sequence belongs to the GppA/Ppx family. GppA subfamily.

The catalysed reaction is guanosine 3'-diphosphate 5'-triphosphate + H2O = guanosine 3',5'-bis(diphosphate) + phosphate + H(+). It functions in the pathway purine metabolism; ppGpp biosynthesis; ppGpp from GTP: step 2/2. Its function is as follows. Catalyzes the conversion of pppGpp to ppGpp. Guanosine pentaphosphate (pppGpp) is a cytoplasmic signaling molecule which together with ppGpp controls the 'stringent response', an adaptive process that allows bacteria to respond to amino acid starvation, resulting in the coordinated regulation of numerous cellular activities. The protein is Guanosine-5'-triphosphate,3'-diphosphate pyrophosphatase of Escherichia fergusonii (strain ATCC 35469 / DSM 13698 / CCUG 18766 / IAM 14443 / JCM 21226 / LMG 7866 / NBRC 102419 / NCTC 12128 / CDC 0568-73).